The following is a 298-amino-acid chain: Pyruvate synthase subunit PorB (298 aa).

Residues Cys-19, Cys-22, Cys-47, and Cys-218 each contribute to the [4Fe-4S] cluster site.

Heterotetramer of one alpha, one beta, one delta and one gamma chain. Requires [4Fe-4S] cluster as cofactor.

The catalysed reaction is 2 oxidized [2Fe-2S]-[ferredoxin] + pyruvate + CoA = 2 reduced [2Fe-2S]-[ferredoxin] + acetyl-CoA + CO2 + H(+). In Methanocaldococcus jannaschii (strain ATCC 43067 / DSM 2661 / JAL-1 / JCM 10045 / NBRC 100440) (Methanococcus jannaschii), this protein is Pyruvate synthase subunit PorB (porB).